A 218-amino-acid polypeptide reads, in one-letter code: dTTP/UTP pyrophosphatase (218 aa).

D69 (proton acceptor) is an active-site residue.

Belongs to the Maf family. YhdE subfamily. Requires a divalent metal cation as cofactor.

It is found in the cytoplasm. The enzyme catalyses dTTP + H2O = dTMP + diphosphate + H(+). It carries out the reaction UTP + H2O = UMP + diphosphate + H(+). In terms of biological role, nucleoside triphosphate pyrophosphatase that hydrolyzes dTTP and UTP. May have a dual role in cell division arrest and in preventing the incorporation of modified nucleotides into cellular nucleic acids. The chain is dTTP/UTP pyrophosphatase from Thermomicrobium roseum (strain ATCC 27502 / DSM 5159 / P-2).